Consider the following 266-residue polypeptide: Phosphatidylserine decarboxylase proenzyme (266 aa).

Residues Asp-74, His-135, and Ser-237 each act as charge relay system; for autoendoproteolytic cleavage activity in the active site. Ser-237 serves as the catalytic Schiff-base intermediate with substrate; via pyruvic acid; for decarboxylase activity. Residue Ser-237 is modified to Pyruvic acid (Ser); by autocatalysis.

The protein belongs to the phosphatidylserine decarboxylase family. PSD-B subfamily. Prokaryotic type I sub-subfamily. As to quaternary structure, heterodimer of a large membrane-associated beta subunit and a small pyruvoyl-containing alpha subunit. Requires pyruvate as cofactor. Is synthesized initially as an inactive proenzyme. Formation of the active enzyme involves a self-maturation process in which the active site pyruvoyl group is generated from an internal serine residue via an autocatalytic post-translational modification. Two non-identical subunits are generated from the proenzyme in this reaction, and the pyruvate is formed at the N-terminus of the alpha chain, which is derived from the carboxyl end of the proenzyme. The autoendoproteolytic cleavage occurs by a canonical serine protease mechanism, in which the side chain hydroxyl group of the serine supplies its oxygen atom to form the C-terminus of the beta chain, while the remainder of the serine residue undergoes an oxidative deamination to produce ammonia and the pyruvoyl prosthetic group on the alpha chain. During this reaction, the Ser that is part of the protease active site of the proenzyme becomes the pyruvoyl prosthetic group, which constitutes an essential element of the active site of the mature decarboxylase.

Its subcellular location is the cell membrane. The catalysed reaction is a 1,2-diacyl-sn-glycero-3-phospho-L-serine + H(+) = a 1,2-diacyl-sn-glycero-3-phosphoethanolamine + CO2. It participates in phospholipid metabolism; phosphatidylethanolamine biosynthesis; phosphatidylethanolamine from CDP-diacylglycerol: step 2/2. In terms of biological role, catalyzes the formation of phosphatidylethanolamine (PtdEtn) from phosphatidylserine (PtdSer). The sequence is that of Phosphatidylserine decarboxylase proenzyme from Campylobacter jejuni subsp. jejuni serotype O:2 (strain ATCC 700819 / NCTC 11168).